The following is a 156-amino-acid chain: Small ribosomal subunit protein uS7 (156 aa).

The protein belongs to the universal ribosomal protein uS7 family. Part of the 30S ribosomal subunit. Contacts proteins S9 and S11.

In terms of biological role, one of the primary rRNA binding proteins, it binds directly to 16S rRNA where it nucleates assembly of the head domain of the 30S subunit. Is located at the subunit interface close to the decoding center, probably blocks exit of the E-site tRNA. The protein is Small ribosomal subunit protein uS7 of Roseobacter denitrificans (strain ATCC 33942 / OCh 114) (Erythrobacter sp. (strain OCh 114)).